The chain runs to 63 residues: MGCGNSTATSAGAGQGPAGAAKDVTEESVTEDDKRRNYGGVYVGLPSEAVNMVSSQTKTVRKN.

Residues 1–12 show a composition bias toward low complexity; it reads MGCGNSTATSAG. Positions 1 to 41 are disordered; the sequence is MGCGNSTATSAGAGQGPAGAAKDVTEESVTEDDKRRNYGGV.

Belongs to the OCC1 family. In terms of tissue distribution, high expression in placenta, skeletal muscle, kidney and pancreas tissues. Absent or very faint expression in heart, brain, lung and liver. Expressed during adipogenic differentiation of mesenchymal stem cells (at protein level).

The polypeptide is Overexpressed in colon carcinoma 1 protein (OCC1) (Homo sapiens (Human)).